A 365-amino-acid polypeptide reads, in one-letter code: Aminomethyltransferase (365 aa).

This sequence belongs to the GcvT family. In terms of assembly, the glycine cleavage system is composed of four proteins: P, T, L and H.

It carries out the reaction N(6)-[(R)-S(8)-aminomethyldihydrolipoyl]-L-lysyl-[protein] + (6S)-5,6,7,8-tetrahydrofolate = N(6)-[(R)-dihydrolipoyl]-L-lysyl-[protein] + (6R)-5,10-methylene-5,6,7,8-tetrahydrofolate + NH4(+). In terms of biological role, the glycine cleavage system catalyzes the degradation of glycine. The chain is Aminomethyltransferase from Desulfitobacterium hafniense (strain DSM 10664 / DCB-2).